A 379-amino-acid polypeptide reads, in one-letter code: Homoserine O-succinyltransferase (379 aa).

The region spanning 51–360 (NAVLICHALS…DAPQGHDAFL (310 aa)) is the AB hydrolase-1 domain. Ser157 (nucleophile) is an active-site residue. A substrate-binding site is contributed by Arg227. Active-site residues include Asp323 and His356. Asp357 provides a ligand contact to substrate.

Belongs to the AB hydrolase superfamily. MetX family. Homodimer.

The protein localises to the cytoplasm. The catalysed reaction is L-homoserine + succinyl-CoA = O-succinyl-L-homoserine + CoA. Its pathway is amino-acid biosynthesis; L-methionine biosynthesis via de novo pathway; O-succinyl-L-homoserine from L-homoserine: step 1/1. Its function is as follows. Transfers a succinyl group from succinyl-CoA to L-homoserine, forming succinyl-L-homoserine. In Pseudomonas aeruginosa (strain UCBPP-PA14), this protein is Homoserine O-succinyltransferase.